A 272-amino-acid polypeptide reads, in one-letter code: Protein UL24 homolog (272 aa).

Belongs to the herpesviridae UL24 family.

The protein resides in the virion. It is found in the host cytoplasm. It localises to the host nucleus. Its subcellular location is the host nucleolus. The protein localises to the host Golgi apparatus. Its function is as follows. May participate in nuclear egress of viral particles. Plays a role in the dispersal of several host nucleolar proteins including NCL/nucleolin and NPM1. Since deletion of host NCL/nucleolin negatively impact on nuclear egress, UL24 supposedly acts on this process through its effect on host nucleoli. This chain is Protein UL24 homolog, found in Equine herpesvirus 1 (strain V592) (EHV-1).